A 1501-amino-acid polypeptide reads, in one-letter code: Ribulose bisphosphate carboxylase (1501 aa).

Asn-111 is a substrate binding site. Lys-166 (proton acceptor) is an active-site residue. Substrate is bound at residue Lys-168. Mg(2+) is bound by residues Lys-191, Asp-193, and Glu-194. Lys-191 bears the N6-carboxylysine mark. His-287 serves as the catalytic Proton acceptor. Arg-288, His-321, and Ser-368 together coordinate substrate. Residues 486–508 (SAAAFVGASVAPAKKENVVARQA) constitute a propeptide, linker. Position 619 (Asn-619) interacts with substrate. The Proton acceptor role is filled by Lys-674. Lys-676 serves as a coordination point for substrate. 3 residues coordinate Mg(2+): Lys-699, Asp-701, and Glu-702. Lys-699 is modified (N6-carboxylysine). His-795 functions as the Proton acceptor in the catalytic mechanism. Residues Arg-796, His-829, and Ser-876 each contribute to the substrate site. A propeptide spans 994 to 1016 (SAAAFVGASVAPAKKENVVARQA) (linker). Asn-1127 is a binding site for substrate. The Proton acceptor role is filled by Lys-1182. Lys-1184 serves as a coordination point for substrate. Residues Lys-1207, Asp-1209, and Glu-1210 each contribute to the Mg(2+) site. Lys-1207 carries the post-translational modification N6-carboxylysine. His-1303 (proton acceptor) is an active-site residue. Substrate-binding residues include Arg-1304, His-1337, and Ser-1384.

The protein belongs to the RuBisCO large chain family. Type II subfamily. In terms of assembly, homodimer. The cofactor is Mg(2+).

The protein localises to the plastid. The protein resides in the chloroplast. It carries out the reaction 2 (2R)-3-phosphoglycerate + 2 H(+) = D-ribulose 1,5-bisphosphate + CO2 + H2O. It catalyses the reaction D-ribulose 1,5-bisphosphate + O2 = 2-phosphoglycolate + (2R)-3-phosphoglycerate + 2 H(+). In terms of biological role, ruBisCO catalyzes two reactions: the carboxylation of D-ribulose 1,5-bisphosphate, the primary event in carbon dioxide fixation, as well as the oxidative fragmentation of the pentose substrate. Both reactions occur simultaneously and in competition at the same active site. This is Ribulose bisphosphate carboxylase (rbcL) from Symbiodinium sp. (Dinoflagellate).